The following is a 368-amino-acid chain: FAD-dependent monooxygenase phomE (368 aa).

Position 11 (Ala-11) interacts with FAD. Catalysis depends on residues Arg-140 and Tyr-178. FAD-binding residues include Asp-249 and Gly-262.

Belongs to the paxM FAD-dependent monooxygenase family. As to quaternary structure, monomer. The cofactor is FAD.

Its function is as follows. FAD-dependent monooxygenase; part of the gene cluster that mediates the biosynthesis of the phomopsins, a group of hexapeptide mycotoxins which infects lupins and causes lupinosis disease in livestock. The role of phomE within the phomopsins biosynthesis pathway has still to be determined. The pathway starts with the processing of the precursor phomA by several endopeptidases including kexin proteases as well as the cluster-specific S41 family peptidase phomP1 and the oligopeptidase phomG to produce 10 identical copies of the hexapeptide Tyr-Val-Ile-Pro-Ile-Asp. After being excised from the precursor peptide, the core peptides are cyclized and modified post-translationally by enzymes encoded within the gene cluster. The timing and order of proteolysis of the phomA precursor and PTMs are still unknown. Two tyrosinase-like enzymes, phomQ1 and phomQ2, catalyze the chlorination and hydroxylation of Tyr, respectively. PhomYb, is proposed to be involved in the construction of the macrocyclic structure. The other 4 ustYa family proteins may be involved in PTMs that generate the unique structure of phomopsin A. PhomYa is required for the hydroxylation of C-beta of Tyr. PhomYc, phomYd, and phomYe are responsible for the biosynthesis of 2,3-dehydroisoleucine (dIle), 2,3-dehydroaspartic acid (dAsp), and 3,4-dehydroproline (dPro), respectively. While dIle formation by phomYc is indispensable for the installation of dAsp by phomYd, the order of the other PTMs have not been elucidated yet. Most of the biosynthetic enzymes likely have broad substrate specificity, and thus, there might be a metabolic grid from a precursor to phomopsin A. The enzyme(s) responsible for the biosynthesis of 3,4-dehydrovaline (dVal) have also not been identified yet. Finally, phomM acts as an S-adenosylmethionine-dependent alpha-N-methyltransferase that catalyzes two successive N-methylation reactions, converting N-desmethyl-phomopsin A to phomopsin A and phomopsin A further to an N,N-dimethylated congener called phomopsin E. The polypeptide is FAD-dependent monooxygenase phomE (Diaporthe leptostromiformis (Lupinosis disease fungus)).